We begin with the raw amino-acid sequence, 395 residues long: Acetate kinase (395 aa).

N8 lines the Mg(2+) pocket. K15 serves as a coordination point for ATP. Position 90 (R90) interacts with substrate. D147 acts as the Proton donor/acceptor in catalysis. Residues 207–211 (HLGNG), 284–286 (DMR), and 330–334 (GIGEN) each bind ATP. E383 contacts Mg(2+).

This sequence belongs to the acetokinase family. In terms of assembly, homodimer. Mg(2+) is required as a cofactor. Mn(2+) serves as cofactor.

The protein localises to the cytoplasm. The catalysed reaction is acetate + ATP = acetyl phosphate + ADP. It functions in the pathway metabolic intermediate biosynthesis; acetyl-CoA biosynthesis; acetyl-CoA from acetate: step 1/2. In terms of biological role, catalyzes the formation of acetyl phosphate from acetate and ATP. Can also catalyze the reverse reaction. In Enterococcus faecalis (strain ATCC 700802 / V583), this protein is Acetate kinase.